The following is a 186-amino-acid chain: Elongation factor P (186 aa).

Belongs to the elongation factor P family.

It localises to the cytoplasm. It participates in protein biosynthesis; polypeptide chain elongation. Its function is as follows. Involved in peptide bond synthesis. Stimulates efficient translation and peptide-bond synthesis on native or reconstituted 70S ribosomes in vitro. Probably functions indirectly by altering the affinity of the ribosome for aminoacyl-tRNA, thus increasing their reactivity as acceptors for peptidyl transferase. This chain is Elongation factor P, found in Streptococcus pneumoniae (strain Hungary19A-6).